The primary structure comprises 272 residues: Proteasome subunit beta type-5 (272 aa).

A propeptide spans methionine 1–glycine 55 (removed in mature form). Threonine 56 (nucleophile) is an active-site residue.

It belongs to the peptidase T1B family. In terms of assembly, the 26S proteasome consists of a 20S proteasome core and two 19S regulatory subunits. The 20S proteasome core is composed of 28 subunits that are arranged in four stacked rings, resulting in a barrel-shaped structure. The two end rings are each formed by seven alpha subunits, and the two central rings are each formed by seven beta subunits. The catalytic chamber with the active sites is on the inside of the barrel.

The protein resides in the cytoplasm. The protein localises to the nucleus. The catalysed reaction is Cleavage of peptide bonds with very broad specificity.. Functionally, the proteasome is a multicatalytic proteinase complex which is characterized by its ability to cleave peptides with Arg, Phe, Tyr, Leu, and Glu adjacent to the leaving group at neutral or slightly basic pH. The proteasome has an ATP-dependent proteolytic activity. In Spinacia oleracea (Spinach), this protein is Proteasome subunit beta type-5.